Reading from the N-terminus, the 162-residue chain is EF-hand calcium-binding domain-containing protein 11 (162 aa).

EF-hand domains follow at residues 18-53 (SERR…LFGY), 91-126 (LYRN…VAPK), and 127-162 (LPSR…GKAK). 5 residues coordinate Ca(2+): Asp140, Asp142, Asp144, His146, and Asp151.

This chain is EF-hand calcium-binding domain-containing protein 11 (Efcab11), found in Rattus norvegicus (Rat).